The primary structure comprises 458 residues: Methionine aminopeptidase 2-2 (458 aa).

Basic and acidic residues predominate over residues 1 to 14 (MGSKTPERDGHKGQ). Residues 1-93 (MGSKTPERDG…QSSPPRVPLS (93 aa)) form a disordered region. The span at 67-82 (QKKKRKSKKKGKKKAA) shows a compositional bias: basic residues. Residue His-209 participates in substrate binding. A divalent metal cation-binding residues include Asp-230, Asp-241, and His-310. Position 318 (His-318) interacts with substrate. 2 residues coordinate a divalent metal cation: Glu-343 and Glu-439.

The protein belongs to the peptidase M24A family. Methionine aminopeptidase eukaryotic type 2 subfamily. Requires Co(2+) as cofactor. It depends on Zn(2+) as a cofactor. Mn(2+) serves as cofactor. Fe(2+) is required as a cofactor.

The protein resides in the cytoplasm. It catalyses the reaction Release of N-terminal amino acids, preferentially methionine, from peptides and arylamides.. In terms of biological role, cotranslationally removes the N-terminal methionine from nascent proteins. The N-terminal methionine is often cleaved when the second residue in the primary sequence is small and uncharged (Met-Ala-, Cys, Gly, Pro, Ser, Thr, or Val). This Emericella nidulans (strain FGSC A4 / ATCC 38163 / CBS 112.46 / NRRL 194 / M139) (Aspergillus nidulans) protein is Methionine aminopeptidase 2-2.